The following is a 158-amino-acid chain: 2-C-methyl-D-erythritol 2,4-cyclodiphosphate synthase (158 aa).

Asp-8 and His-10 together coordinate a divalent metal cation. 4-CDP-2-C-methyl-D-erythritol 2-phosphate is bound by residues Asp-8–His-10 and His-34–Ser-35. His-42 is an a divalent metal cation binding site. Residues Asp-56–Gly-58, Phe-61–Asp-65, Ala-100–Leu-106, Thr-132–Glu-135, and Phe-139 contribute to the 4-CDP-2-C-methyl-D-erythritol 2-phosphate site.

This sequence belongs to the IspF family. Homotrimer. It depends on a divalent metal cation as a cofactor.

It carries out the reaction 4-CDP-2-C-methyl-D-erythritol 2-phosphate = 2-C-methyl-D-erythritol 2,4-cyclic diphosphate + CMP. The protein operates within isoprenoid biosynthesis; isopentenyl diphosphate biosynthesis via DXP pathway; isopentenyl diphosphate from 1-deoxy-D-xylulose 5-phosphate: step 4/6. Involved in the biosynthesis of isopentenyl diphosphate (IPP) and dimethylallyl diphosphate (DMAPP), two major building blocks of isoprenoid compounds. Catalyzes the conversion of 4-diphosphocytidyl-2-C-methyl-D-erythritol 2-phosphate (CDP-ME2P) to 2-C-methyl-D-erythritol 2,4-cyclodiphosphate (ME-CPP) with a corresponding release of cytidine 5-monophosphate (CMP). The sequence is that of 2-C-methyl-D-erythritol 2,4-cyclodiphosphate synthase from Clostridium beijerinckii (strain ATCC 51743 / NCIMB 8052) (Clostridium acetobutylicum).